The primary structure comprises 502 residues: Probable glycine dehydrogenase (decarboxylating) subunit 2 (502 aa).

Position 273 is an N6-(pyridoxal phosphate)lysine (Lys273).

Belongs to the GcvP family. C-terminal subunit subfamily. In terms of assembly, the glycine cleavage system is composed of four proteins: P, T, L and H. In this organism, the P 'protein' is a heterodimer of two subunits. Requires pyridoxal 5'-phosphate as cofactor.

The catalysed reaction is N(6)-[(R)-lipoyl]-L-lysyl-[glycine-cleavage complex H protein] + glycine + H(+) = N(6)-[(R)-S(8)-aminomethyldihydrolipoyl]-L-lysyl-[glycine-cleavage complex H protein] + CO2. In terms of biological role, the glycine cleavage system catalyzes the degradation of glycine. The P protein binds the alpha-amino group of glycine through its pyridoxal phosphate cofactor; CO(2) is released and the remaining methylamine moiety is then transferred to the lipoamide cofactor of the H protein. The protein is Probable glycine dehydrogenase (decarboxylating) subunit 2 of Thermococcus onnurineus (strain NA1).